The primary structure comprises 1055 residues: Focal adhesion kinase 1 (1055 aa).

Residues 1-29 (MAAAYLDPNLNHTPSSSTKTHLGTGTERS) form a disordered region. A2 bears the N-acetylalanine mark. At Y5 the chain carries Phosphotyrosine. Positions 10–27 (LNHTPSSSTKTHLGTGTE) are enriched in polar residues. T13 is subject to Phosphothreonine. S29 and S54 each carry phosphoserine. One can recognise an FERM domain in the interval 35–355 (RVLKVFHYFE…GYCRLVNGAT (321 aa)). K152 is covalently cross-linked (Glycyl lysine isopeptide (Lys-Gly) (interchain with G-Cter in SUMO)). Position 397 is a phosphotyrosine; by autocatalysis (Y397). Phosphotyrosine is present on Y407. The 259-residue stretch at 422–680 (IELGRCIGEG…ELKAQLSTIL (259 aa)) folds into the Protein kinase domain. Residues 428–434 (IGEGQFG), K454, and 500–502 (ELC) contribute to the ATP site. The active-site Proton acceptor is D546. Y570 and Y576 each carry phosphotyrosine. At Y577 the chain carries Phosphotyrosine; by RET and SRC. Residue S580 is modified to Phosphoserine. Over residues 685-697 (VQQEERMRMESRR) the composition is skewed to basic and acidic residues. Disordered regions lie at residues 685–734 (VQQE…PSPQ) and 837–923 (VRLS…LDRS). An interaction with TGFB1I1 region spans residues 707 to 1055 (GSDEAPPKPS…LKMLGQTRPH (349 aa)). S722 is subject to Phosphoserine. S732 carries the phosphoserine; by CDK5 modification. Over residues 837 to 849 (VRLSRGSIDREDG) the composition is skewed to basic and acidic residues. S843 carries the post-translational modification Phosphoserine. Y861 is subject to Phosphotyrosine. Over residues 869 to 880 (PAAPPKKPPRPG) the composition is skewed to pro residues. Positions 886–896 (SNLSSISSPAE) are enriched in polar residues. Phosphoserine is present on S913. The segment at 915 to 1055 (PPTANLDRSN…LKMLGQTRPH (141 aa)) is interaction with ARHGEF28. T917 is modified (phosphothreonine). Y928 is modified (phosphotyrosine).

This sequence belongs to the protein kinase superfamily. Tyr protein kinase family. FAK subfamily. Interacts with GIT1. Component of a complex that contains at least FER, CTTN and PTK2/FAK1. Interacts with BMX. Interacts with STEAP4. Interacts with ZFYVE21. Interacts with ESR1. Interacts with PIK3R1 or PIK3R2. Interacts with FGR, FLT4 and RET. Interacts with EPHA2 in resting cells; activation of EPHA2 recruits PTPN11, leading to dephosphorylation of PTK2/FAK1 and dissociation of the complex. Interacts with EPHA1 (kinase activity-dependent). Interacts with P53/TP53. Interacts (via first Pro-rich region) with CAS family members (via SH3 domain), including BCAR1, BCAR3, and CASS4. Interacts with NEDD9 (via SH3 domain). Interacts with TGFB1I1. Interacts with SRC, GRB2 and GRB7. Interacts with ARHGEF28. Interacts with SHB. Part of a complex composed of THSD1, PTK2/FAK1, TLN1 and VCL. Interacts with PXN and TLN1. Interacts with SORBS1. Interacts with STAT1. Interacts with WASL. Interacts with ARHGAP26 and SHC1. Interacts with RB1CC1; this inhibits PTK2/FAK1 activity and activation of downstream signaling pathways. Interacts with ARHGEF7. Interacts with MDM2. Interacts with PIAS1. Interacts with DCC. Interacts with LPXN (via LD motif 3). Interacts with MISP. Interacts with EMP2; regulates PTK2 activation and localization. Interacts with DSCAM. Interacts with AMBRA1. Interacts (when tyrosine-phosphorylated) with tensin TNS1; the interaction is increased by phosphorylation of TNS1. In terms of processing, phosphorylated on tyrosine residues upon activation, e.g. upon integrin signaling. Tyr-397 is the major autophosphorylation site, but other kinases can also phosphorylate this residue. Phosphorylation at Tyr-397 promotes interaction with SRC and SRC family members, leading to phosphorylation at Tyr-576, Tyr-577 and at additional tyrosine residues. FGR promotes phosphorylation at Tyr-397 and Tyr-576. FER promotes phosphorylation at Tyr-577, Tyr-861 and Tyr-928, even when cells are not adherent. Tyr-397, Tyr-576 and Ser-722 are phosphorylated only when cells are adherent. Phosphorylation at Tyr-397 is important for interaction with BMX, PIK3R1 and SHC1. Phosphorylation at Tyr-928 is important for interaction with GRB2. Dephosphorylated by PTPN11; PTPN11 is recruited to PTK2 via EPHA2 (tyrosine phosphorylated). Microtubule-induced dephosphorylation at Tyr-397 is crucial for the induction of focal adhesion disassembly; this dephosphorylation could be catalyzed by PTPN11 and regulated by ZFYVE21. Phosphorylation on tyrosine residues is enhanced by NTN1. Sumoylated; this enhances autophosphorylation.

Its subcellular location is the cell junction. The protein resides in the focal adhesion. It is found in the cell membrane. The protein localises to the cytoplasm. It localises to the perinuclear region. Its subcellular location is the cell cortex. The protein resides in the cytoskeleton. It is found in the microtubule organizing center. The protein localises to the centrosome. It localises to the nucleus. Its subcellular location is the cilium basal body. The catalysed reaction is L-tyrosyl-[protein] + ATP = O-phospho-L-tyrosyl-[protein] + ADP + H(+). Its activity is regulated as follows. Subject to autoinhibition, mediated by interactions between the FERM domain and the kinase domain. Activated by autophosphorylation at Tyr-397. This promotes interaction with SRC and phosphorylation at Tyr-576 and Tyr-577 in the kinase activation loop by SRC. Phosphorylation at Tyr-397, Tyr-576 and Tyr-577 is required for maximal kinase activity. Functionally, non-receptor protein-tyrosine kinase that plays an essential role in regulating cell migration, adhesion, spreading, reorganization of the actin cytoskeleton, formation and disassembly of focal adhesions and cell protrusions, cell cycle progression, cell proliferation and apoptosis. Required for early embryonic development and placenta development. Required for embryonic angiogenesis, normal cardiomyocyte migration and proliferation, and normal heart development. Regulates axon growth and neuronal cell migration, axon branching and synapse formation; required for normal development of the nervous system. Plays a role in osteogenesis and differentiation of osteoblasts. Functions in integrin signal transduction, but also in signaling downstream of numerous growth factor receptors, G-protein coupled receptors (GPCR), EPHA2, netrin receptors and LDL receptors. Forms multisubunit signaling complexes with SRC and SRC family members upon activation; this leads to the phosphorylation of additional tyrosine residues, creating binding sites for scaffold proteins, effectors and substrates. Regulates numerous signaling pathways. Promotes activation of phosphatidylinositol 3-kinase and the AKT1 signaling cascade. Promotes activation of MAPK1/ERK2, MAPK3/ERK1 and the MAP kinase signaling cascade. Promotes localized and transient activation of guanine nucleotide exchange factors (GEFs) and GTPase-activating proteins (GAPs), and thereby modulates the activity of Rho family GTPases. Signaling via CAS family members mediates activation of RAC1. Phosphorylates NEDD9 following integrin stimulation. Recruits the ubiquitin ligase MDM2 to P53/TP53 in the nucleus, and thereby regulates P53/TP53 activity, P53/TP53 ubiquitination and proteasomal degradation. Phosphorylates SRC; this increases SRC kinase activity. Phosphorylates ACTN1, ARHGEF7, GRB7, RET and WASL. Promotes phosphorylation of PXN and STAT1; most likely PXN and STAT1 are phosphorylated by a SRC family kinase that is recruited to autophosphorylated PTK2/FAK1, rather than by PTK2/FAK1 itself. Promotes phosphorylation of BCAR1; GIT2 and SHC1; this requires both SRC and PTK2/FAK1. Promotes phosphorylation of BMX and PIK3R1. In terms of biological role, does not contain a kinase domain and inhibits PTK2/FAK1 phosphorylation and signaling. Its enhanced expression can attenuate the nuclear accumulation of LPXN and limit its ability to enhance serum response factor (SRF)-dependent gene transcription. This Rattus norvegicus (Rat) protein is Focal adhesion kinase 1.